The sequence spans 91 residues: Probable Fe(2+)-trafficking protein (91 aa).

This sequence belongs to the Fe(2+)-trafficking protein family.

Could be a mediator in iron transactions between iron acquisition and iron-requiring processes, such as synthesis and/or repair of Fe-S clusters in biosynthetic enzymes. The chain is Probable Fe(2+)-trafficking protein from Polynucleobacter necessarius subsp. necessarius (strain STIR1).